Reading from the N-terminus, the 543-residue chain is Transmembrane protease serine 13 (543 aa).

Disordered regions lie at residues 1–96 and 109–129; these read MDRG…TRVY and RASPARSAPATRATRESPGLS. Residues 1–143 are Cytoplasmic-facing; that stretch reads MDRGSHRNSS…SWQETQRQLP (143 aa). 2 consecutive repeat copies span residues 14 to 17 and 18 to 22. A 4 X 4 AA repeats of T-P-P-Q region spans residues 14–49; the sequence is TPPQASPARTSPARAPPQASPARTPPQASPARTPPQ. The segment at 18–69 is 8 X 5 AA repeats of A-S-P-A-R; the sequence is ASPARTSPARAPPQASPARTPPQASPARTPPQASPARAPPPQASPARASPAR. The 2-2; approximate repeat unit spans residues 23–27; that stretch reads TSPAR. Positions 27-60 are enriched in pro residues; sequence RAPPQASPARTPPQASPARTPPQASPARAPPPQA. A 1-2; approximate repeat occupies 28-31; the sequence is APPQ. A run of 5 repeats spans residues 32-36, 37-40, 41-45, 46-49, and 50-54. A 2-6; approximate repeat occupies 55–59; sequence APPPQ. 2 consecutive repeat copies span residues 60–64 and 65–69. Composition is skewed to low complexity over residues 61-94 and 109-120; these read SPARASPARAPPSRSSSGRSSSARSASTTSSPTR and RASPARSAPATR. A helical; Signal-anchor for type II membrane protein membrane pass occupies residues 144-164; it reads LIGCVILLISLVISLILLFYF. At 165-543 the chain is on the extracellular side; it reads WRGHTGIKYK…MESEVRFRKS (379 aa). An LDL-receptor class A domain is found at 180 to 202; it reads CPIHAVRCDGVVDCKMKSDELGC. One can recognise an SRCR domain in the interval 199–301; sequence ELGCVRFDWD…HCGLRAMTGR (103 aa). 3 disulfide bridges follow: C226–C290, C239–C293, and C327–C343. Residues N231 and N268 are each glycosylated (N-linked (GlcNAc...) asparagine). Residues 302-535 form the Peptidase S1 domain; the sequence is IVGGALTSES…VLPWIYRKME (234 aa). The Charge relay system role is filled by H342. A glycan (N-linked (GlcNAc...) asparagine) is linked at N381. Residue D390 is the Charge relay system of the active site. N421 carries N-linked (GlcNAc...) asparagine glycosylation. Intrachain disulfides connect C424–C493, C456–C472, and C483–C511. S487 serves as the catalytic Charge relay system.

It belongs to the peptidase S1 family. Interacts with SPINT1/HAI-1; the interaction promotes the phosphorylation and cell membrane localization of TMPRSS13. Interacts with SPINT2/HAI-2; the interaction promotes the phosphorylation and cell membrane localization of TMPRSS13. Post-translationally, the inactive zymogen is post-translationally modified and then trafficked to the cell surface, whereby it undergoes autocatalytic cleavage resulting in an activated form that is released extracellularly. Phosphorylation is required for localization at the cell surface. Phosphorylation increases following inhibition of protease activity by SPINT2/HAI-2. As to expression, expressed in the suprabasal squamous epithelium of the epidermis, hair follicles, oral epithelium, cornea, upper digestive tract, transitional epithelium of the bladder, prostate, heart, intestine, kidney and thymus.

It is found in the cell membrane. It localises to the secreted. Its subcellular location is the cytoplasm. With respect to regulation, cleavage of HGF is inhibited by SPINT1/HAI-1 via the BPTI/Kunitz inhibitor 1 domain. Functionally, serine protease. Cleaves the proform of PRSS8/prostasin to form the active protein. Cleaves the proform of HGF to form the active protein which promotes MAPK signaling. Promotes the formation of the stratum corneum and subsequently the epidermal barrier in embryos. The chain is Transmembrane protease serine 13 (Tmprss13) from Mus musculus (Mouse).